The chain runs to 395 residues: Scyllo-inosose 3-dehydrogenase (395 aa).

Zn(2+) is bound at residue cysteine 66. Residues serine 68 and histidine 71 each act as charge relay system in the active site. Histidine 95, glutamate 96, cysteine 131, cysteine 134, cysteine 137, cysteine 145, and glutamate 193 together coordinate Zn(2+). NAD(+)-binding residues include isoleucine 223, glutamate 243, and arginine 248.

Belongs to the zinc-containing alcohol dehydrogenase family. Homodimer. Zn(2+) is required as a cofactor.

The catalysed reaction is scyllo-inosose + NAD(+) = 3-dehydro-scyllo-inosose + NADH + H(+). Its pathway is polyol metabolism; myo-inositol metabolism. Its function is as follows. Catalyzes the NAD(+)-dependent oxidation of scyllo-inosose (2-keto-myo-inositol) to 3-dehydro-scyllo-inosose (diketo-inositol), and thus probably functions in a myo-inositol degradation pathway together with IolG, IolN and IolO. Has no activity on myo-inositol, D-chiro-inositol and 1-keto-D-chiro-inositol. This chain is Scyllo-inosose 3-dehydrogenase, found in Thermotoga maritima (strain ATCC 43589 / DSM 3109 / JCM 10099 / NBRC 100826 / MSB8).